The primary structure comprises 403 residues: Creatinase (403 aa).

The active site involves His-232.

The protein belongs to the peptidase M24 family. Creatinase subfamily. In terms of assembly, homodimer.

It carries out the reaction creatine + H2O = sarcosine + urea. The chain is Creatinase from Flavobacterium sp. (strain U-188).